The sequence spans 181 residues: Macro domain-containing protein in sno 5'region (181 aa).

A Macro domain is found at 1–172; that stretch reads MTTITLVQGD…TFARELGDAG (172 aa).

The protein belongs to the MacroD-type family.

In Streptomyces nogalater, this protein is Macro domain-containing protein in sno 5'region.